Reading from the N-terminus, the 99-residue chain is Phosphoribosyl-ATP pyrophosphatase (99 aa).

The protein belongs to the PRA-PH family.

Its subcellular location is the cytoplasm. It carries out the reaction 1-(5-phospho-beta-D-ribosyl)-ATP + H2O = 1-(5-phospho-beta-D-ribosyl)-5'-AMP + diphosphate + H(+). The protein operates within amino-acid biosynthesis; L-histidine biosynthesis; L-histidine from 5-phospho-alpha-D-ribose 1-diphosphate: step 2/9. This chain is Phosphoribosyl-ATP pyrophosphatase, found in Methanosphaerula palustris (strain ATCC BAA-1556 / DSM 19958 / E1-9c).